The following is a 78-amino-acid chain: U7-lycotoxin-Ls1f (78 aa).

Positions 1–22 (MKLIIFTGLALLLIVSLIDVEA) are cleaved as a signal peptide. A propeptide spanning residues 23 to 26 (QNEG) is cleaved from the precursor.

The protein belongs to the neurotoxin 19 (CSTX) family. 07 (U7-Lctx) subfamily. In terms of processing, contains 4 disulfide bonds. In terms of tissue distribution, expressed by the venom gland.

The protein resides in the secreted. This chain is U7-lycotoxin-Ls1f, found in Lycosa singoriensis (Wolf spider).